Consider the following 295-residue polypeptide: MSVKHFIQITKPGIIFGNVLSVAGGFFLASKGHVDFALFLAVVIGTSLVVASGCVFNNCIDRDIDHKMERTKNRVMVQGGMSLPLALIYATLLGVAGFSLLYVQANPLSAFCALIGFIVYVGFYSLWLKRKSVHGTLVGSLSGAMPPVIGYCAVSNSFDLAAVTLLVMFSLWQMPHSFAIAIFRFKDYSAANIPVLPVARGILAAKKQIVLYVLAFVLATLMLTLGGYAGLGYLAVAAAMGLYWLYMAWGGYKAEDDSKWARKVFGFSILTVTALSVMMGVDSQTAADVLMTYAR.

The Cytoplasmic segment spans residues 1-9 (MSVKHFIQI). The helical transmembrane segment at 10–28 (TKPGIIFGNVLSVAGGFFL) threads the bilayer. At 29-37 (ASKGHVDFA) the chain is on the periplasmic side. Residues 38-56 (LFLAVVIGTSLVVASGCVF) traverse the membrane as a helical segment. The Cytoplasmic segment spans residues 57–78 (NNCIDRDIDHKMERTKNRVMVQ). A helical transmembrane segment spans residues 79–97 (GGMSLPLALIYATLLGVAG). Residues 98–107 (FSLLYVQANP) lie on the Periplasmic side of the membrane. A helical membrane pass occupies residues 108 to 126 (LSAFCALIGFIVYVGFYSL). Topologically, residues 127–197 (WLKRKSVHGT…YSAANIPVLP (71 aa)) are cytoplasmic. A helical transmembrane segment spans residues 198 to 216 (VARGILAAKKQIVLYVLAF). The Periplasmic portion of the chain corresponds to 217-228 (VLATLMLTLGGY). A helical transmembrane segment spans residues 229–247 (AGLGYLAVAAAMGLYWLYM). Residues 248-268 (AWGGYKAEDDSKWARKVFGFS) lie on the Cytoplasmic side of the membrane. The helical transmembrane segment at 269–287 (ILTVTALSVMMGVDSQTAA) threads the bilayer. Over 288–295 (DVLMTYAR) the chain is Periplasmic.

The protein belongs to the UbiA prenyltransferase family. It depends on Mg(2+) as a cofactor. Ca(2+) is required as a cofactor.

Its subcellular location is the cell inner membrane. It carries out the reaction heme b + (2E,6E)-farnesyl diphosphate + H2O = Fe(II)-heme o + diphosphate. Converts protoheme IX and farnesyl diphosphate to heme O. The polypeptide is Protoheme IX farnesyltransferase (cyoE) (Pseudomonas putida (Arthrobacter siderocapsulatus)).